A 138-amino-acid polypeptide reads, in one-letter code: Basic phospholipase A2 Mtx-b (138 aa).

The N-terminal stretch at 1–16 (MRALWIVAVLLVGVEG) is a signal peptide. 7 disulfides stabilise this stretch: C42-C131, C44-C60, C59-C111, C65-C138, C66-C104, C73-C97, and C91-C102. The Ca(2+) site is built by Y43, G45, and G47. H63 is an active-site residue. D64 serves as a coordination point for Ca(2+). The active site involves D105.

Heterodimer of an acidic subunit and a basic chain. The acidic subunit is non-toxic, without enzymatic activity and comprises 3 peptides that are cross-linked by 7 disulfide bridges. The basic subunit is toxic, has phospholipase A2 activity and is composed of a single chain. It depends on Ca(2+) as a cofactor. As to expression, expressed by the venom gland.

The protein localises to the secreted. It carries out the reaction a 1,2-diacyl-sn-glycero-3-phosphocholine + H2O = a 1-acyl-sn-glycero-3-phosphocholine + a fatty acid + H(+). Functionally, snake venom phospholipase A2 (PLA2) that inhibits neuromuscular transmission by blocking acetylcholine release from the nerve termini. PLA2 catalyzes the calcium-dependent hydrolysis of the 2-acyl groups in 3-sn-phosphoglycerides. The chain is Basic phospholipase A2 Mtx-b from Crotalus scutulatus scutulatus (Mojave rattlesnake).